The chain runs to 176 residues: Dual specificity phosphatase 28 (176 aa).

In terms of domain architecture, Tyrosine-protein phosphatase spans 17–159 (PPLVRVAPSL…LQKYEEALQA (143 aa)). The active-site Phosphocysteine intermediate is the Cys-103.

The protein belongs to the protein-tyrosine phosphatase family. Non-receptor class dual specificity subfamily. As to quaternary structure, monomer.

It carries out the reaction O-phospho-L-tyrosyl-[protein] + H2O = L-tyrosyl-[protein] + phosphate. It catalyses the reaction O-phospho-L-seryl-[protein] + H2O = L-seryl-[protein] + phosphate. The enzyme catalyses O-phospho-L-threonyl-[protein] + H2O = L-threonyl-[protein] + phosphate. In terms of biological role, has phosphatase activity with the synthetic substrate 6,8-difluoro-4-methylumbelliferyl phosphate (in vitro). Has almost no detectable activity with phosphotyrosine, even less activity with phosphothreonine and displays complete lack of activity with phosphoserine. The poor activity with phosphotyrosine may be due to steric hindrance by bulky amino acid sidechains that obstruct access to the active site. The sequence is that of Dual specificity phosphatase 28 (DUSP28) from Homo sapiens (Human).